Reading from the N-terminus, the 89-residue chain is Serine-rich and transmembrane domain-containing 2 (89 aa).

N11 carries N-linked (GlcNAc...) asparagine glycosylation. A helical transmembrane segment spans residues 38-58; sequence YVGLFLSLLAILLILLFTMLL.

Its subcellular location is the membrane. The polypeptide is Serine-rich and transmembrane domain-containing 2 (Mus musculus (Mouse)).